The following is a 173-amino-acid chain: Shikimate kinase (173 aa).

Residue 16–21 (GSGKTT) participates in ATP binding. T20 contacts Mg(2+). The substrate site is built by D38, R62, and G83. R120 contributes to the ATP binding site. R139 lines the substrate pocket. R156 contributes to the ATP binding site.

The protein belongs to the shikimate kinase family. As to quaternary structure, monomer. Mg(2+) is required as a cofactor.

Its subcellular location is the cytoplasm. It catalyses the reaction shikimate + ATP = 3-phosphoshikimate + ADP + H(+). It participates in metabolic intermediate biosynthesis; chorismate biosynthesis; chorismate from D-erythrose 4-phosphate and phosphoenolpyruvate: step 5/7. In terms of biological role, catalyzes the specific phosphorylation of the 3-hydroxyl group of shikimic acid using ATP as a cosubstrate. The sequence is that of Shikimate kinase from Corynebacterium diphtheriae (strain ATCC 700971 / NCTC 13129 / Biotype gravis).